The sequence spans 340 residues: Ketol-acid reductoisomerase (NADP(+)) (340 aa).

The region spanning 1 to 183 (MAITVYYDKD…GGGRTGIIET (183 aa)) is the KARI N-terminal Rossmann domain. Residues 26 to 29 (FGSQ), R49, S52, S54, and 84 to 87 (DEIQ) contribute to the NADP(+) site. H109 is an active-site residue. G135 contacts NADP(+). Positions 184–329 (TFKAETETDL…RNLRAMMPWI (146 aa)) constitute a KARI C-terminal knotted domain. Mg(2+) contacts are provided by D192, E196, E228, and E232. S253 contacts substrate.

The protein belongs to the ketol-acid reductoisomerase family. The cofactor is Mg(2+).

It carries out the reaction (2R)-2,3-dihydroxy-3-methylbutanoate + NADP(+) = (2S)-2-acetolactate + NADPH + H(+). It catalyses the reaction (2R,3R)-2,3-dihydroxy-3-methylpentanoate + NADP(+) = (S)-2-ethyl-2-hydroxy-3-oxobutanoate + NADPH + H(+). It functions in the pathway amino-acid biosynthesis; L-isoleucine biosynthesis; L-isoleucine from 2-oxobutanoate: step 2/4. The protein operates within amino-acid biosynthesis; L-valine biosynthesis; L-valine from pyruvate: step 2/4. Functionally, involved in the biosynthesis of branched-chain amino acids (BCAA). Catalyzes an alkyl-migration followed by a ketol-acid reduction of (S)-2-acetolactate (S2AL) to yield (R)-2,3-dihydroxy-isovalerate. In the isomerase reaction, S2AL is rearranged via a Mg-dependent methyl migration to produce 3-hydroxy-3-methyl-2-ketobutyrate (HMKB). In the reductase reaction, this 2-ketoacid undergoes a metal-dependent reduction by NADPH to yield (R)-2,3-dihydroxy-isovalerate. This Campylobacter jejuni (strain RM1221) protein is Ketol-acid reductoisomerase (NADP(+)).